The following is a 360-amino-acid chain: Snurportin-1 (360 aa).

M1 is subject to N-acetylmethionine. Positions 1–42 (MEELSQALASSFSVSQDLNSTAAPHPRLSQYKSKYSSLEQSE) are disordered. The segment at 1–65 (MEELSQALAS…LDYVNHARRL (65 aa)) is necessary for interaction with KPNB1 and m3G-cap U1 and U5 snRNP import receptor activity. Residues 1 to 159 (MEELSQALAS…NRFSSLLPGG (159 aa)) are necessary for interaction with XPO1. A compositionally biased stretch (polar residues) spans 7-22 (ALASSFSVSQDLNSTA). The region spanning 11 to 73 (SFSVSQDLNS…RLAEDDWTGM (63 aa)) is the IBB domain. Position 75 is a phosphoserine (S75). The interval 127-129 (GKR) is interaction with m3G-cap structure. The necessary for binding to the m3G-cap structure stretch occupies residues 208–328 (MHSKLPEEEG…GMKEKLTHKA (121 aa)). The interval 339–360 (LSTPKLKGSSHSPDHPGCLMEN) is disordered. Phosphoserine is present on S350.

It belongs to the snurportin family. Component of an import snRNP complex composed of KPNB1, SNUPN, SMN1 and ZNF259. Component of a nuclear export receptor complex composed of KPNB1, Ran, SNUPN and XPO1. Found in a trimeric export complex with SNUPN, Ran and XPO1. Interacts (via IBB domain) with KPNB1; the interaction is direct. Interacts with DDX20, IPO7, SMN1, SNRPB and XPO1. Interacts directly with XPO1. Its interaction with XPO1 and binding to m3G-cap U snRNPs appears to be mutually exclusive. Can form homomers.

It is found in the nucleus. The protein resides in the cytoplasm. Functions as an U snRNP-specific nuclear import adapter. Involved in the trimethylguanosine (m3G)-cap-dependent nuclear import of U snRNPs. Binds specifically to the terminal m3G-cap U snRNAs. In Homo sapiens (Human), this protein is Snurportin-1 (SNUPN).